The chain runs to 197 residues: Thymidine kinase (197 aa).

ATP contacts are provided by residues serine 9 to threonine 16 and aspartate 87 to histidine 90. The active-site Proton acceptor is the glutamate 88. Zn(2+)-binding residues include cysteine 145, cysteine 147, cysteine 187, and histidine 190.

The protein belongs to the thymidine kinase family. As to quaternary structure, homotetramer.

The protein localises to the cytoplasm. The enzyme catalyses thymidine + ATP = dTMP + ADP + H(+). The protein is Thymidine kinase of Francisella tularensis subsp. holarctica (strain LVS).